Here is a 201-residue protein sequence, read N- to C-terminus: Translation initiation factor IF-3 (201 aa).

The tract at residues 170-201 is disordered; it reads TPKSASKKGHTPPKTQVEASKQANESAETEEE. Positions 182–195 are enriched in polar residues; it reads PKTQVEASKQANES.

The protein belongs to the IF-3 family. In terms of assembly, monomer.

It localises to the cytoplasm. In terms of biological role, IF-3 binds to the 30S ribosomal subunit and shifts the equilibrium between 70S ribosomes and their 50S and 30S subunits in favor of the free subunits, thus enhancing the availability of 30S subunits on which protein synthesis initiation begins. This chain is Translation initiation factor IF-3, found in Porphyromonas gingivalis (strain ATCC BAA-308 / W83).